The sequence spans 162 residues: Putative ankyrin repeat protein R664 (162 aa).

ANK repeat units lie at residues Lys10–Tyr40, Asn47–Tyr78, and Tyr82–Leu111.

The chain is Putative ankyrin repeat protein R664 from Acanthamoeba polyphaga mimivirus (APMV).